The sequence spans 283 residues: Bifunctional protein FolD (283 aa).

Residue 166-168 (GAS) participates in NADP(+) binding.

This sequence belongs to the tetrahydrofolate dehydrogenase/cyclohydrolase family. In terms of assembly, homodimer.

The catalysed reaction is (6R)-5,10-methylene-5,6,7,8-tetrahydrofolate + NADP(+) = (6R)-5,10-methenyltetrahydrofolate + NADPH. It carries out the reaction (6R)-5,10-methenyltetrahydrofolate + H2O = (6R)-10-formyltetrahydrofolate + H(+). It functions in the pathway one-carbon metabolism; tetrahydrofolate interconversion. Its function is as follows. Catalyzes the oxidation of 5,10-methylenetetrahydrofolate to 5,10-methenyltetrahydrofolate and then the hydrolysis of 5,10-methenyltetrahydrofolate to 10-formyltetrahydrofolate. This chain is Bifunctional protein FolD, found in Coxiella burnetii (strain CbuK_Q154) (Coxiella burnetii (strain Q154)).